Here is a 415-residue protein sequence, read N- to C-terminus: Gamma-glutamyl phosphate reductase (415 aa).

It belongs to the gamma-glutamyl phosphate reductase family.

The protein localises to the cytoplasm. The catalysed reaction is L-glutamate 5-semialdehyde + phosphate + NADP(+) = L-glutamyl 5-phosphate + NADPH + H(+). It functions in the pathway amino-acid biosynthesis; L-proline biosynthesis; L-glutamate 5-semialdehyde from L-glutamate: step 2/2. Its function is as follows. Catalyzes the NADPH-dependent reduction of L-glutamate 5-phosphate into L-glutamate 5-semialdehyde and phosphate. The product spontaneously undergoes cyclization to form 1-pyrroline-5-carboxylate. The sequence is that of Gamma-glutamyl phosphate reductase from Bacillus velezensis (strain DSM 23117 / BGSC 10A6 / LMG 26770 / FZB42) (Bacillus amyloliquefaciens subsp. plantarum).